The following is a 353-amino-acid chain: Putative ABC transporter ATP-binding protein MG303 homolog (353 aa).

The 241-residue stretch at 72 to 312 (LYFYNLSVFV…MQLLQRYEIT (241 aa)) folds into the ABC transporter domain. Residue 107-114 (GPSGSGKT) participates in ATP binding.

Belongs to the ABC transporter superfamily.

The polypeptide is Putative ABC transporter ATP-binding protein MG303 homolog (Mycoplasma pneumoniae (strain ATCC 29342 / M129 / Subtype 1) (Mycoplasmoides pneumoniae)).